The primary structure comprises 190 residues: Ladderlectin (190 aa).

The first 18 residues, 1–18, serve as a signal peptide directing secretion; the sequence is MAMLTISLLLCAAVALNG. The C-type lectin domain occupies 60–179; it reads GSRCFMFVET…GNSFPSGVLQ (120 aa). The cysteines at positions 153 and 169 are disulfide-linked.

As to quaternary structure, multimeric. As to expression, expressed in cells of the branchial epithelium, hepatic sinusoids, biliary epithelium, renal interstitium, skin, and sub-mucosal granular layer of the intestine. Highly expressed in caudal kidney. Moderately expressed in liver. Weakly expressed in gill, spleen, cranial kidney and skin. Isoform 1 is highly expressed in intestine. Isoform 2 is weakly expressed in intestine.

Its function is as follows. Lectin that binds sepharose in a calcium-dependent manner. This is Ladderlectin from Oncorhynchus mykiss (Rainbow trout).